The chain runs to 405 residues: Phosphoglycerate kinase (405 aa).

Residues 21–23, arginine 36, 59–62, arginine 119, and arginine 161 contribute to the substrate site; these read DFN and HLGR. ATP contacts are provided by residues lysine 212, glycine 301, glutamate 332, and 361-364; that span reads GGDS.

Belongs to the phosphoglycerate kinase family. As to quaternary structure, monomer.

It localises to the cytoplasm. The catalysed reaction is (2R)-3-phosphoglycerate + ATP = (2R)-3-phospho-glyceroyl phosphate + ADP. Its pathway is carbohydrate degradation; glycolysis; pyruvate from D-glyceraldehyde 3-phosphate: step 2/5. In Leuconostoc citreum (strain KM20), this protein is Phosphoglycerate kinase.